The following is a 113-amino-acid chain: Antisense of depressing factor protein 1 (113 aa).

A compositionally biased stretch (basic residues) spans 1 to 11 (MGKCSMKKKGV). Residues 1–35 (MGKCSMKKKGVGKNVGVGKKVQKKRSISTAERKRT) form a disordered region.

It belongs to the ADF1 family.

It is found in the nucleus. In terms of biological role, transcriptional repressor which negatively regulates transcription of FYV5 by binding to the promoter on the sense strand. This chain is Antisense of depressing factor protein 1, found in Saccharomyces cerevisiae (strain ATCC 204508 / S288c) (Baker's yeast).